A 238-amino-acid chain; its full sequence is Probable transcriptional regulatory protein Sde_1551 (238 aa).

It belongs to the TACO1 family.

It localises to the cytoplasm. In Saccharophagus degradans (strain 2-40 / ATCC 43961 / DSM 17024), this protein is Probable transcriptional regulatory protein Sde_1551.